The following is a 651-amino-acid chain: Acetyl-coenzyme A synthetase (651 aa).

Residues 189–192 (RGGK), T311, and N335 contribute to the CoA site. ATP-binding positions include 387–389 (GEP), 411–416 (DTWWQT), D500, and R515. Residue S523 participates in CoA binding. R526 serves as a coordination point for ATP. The Mg(2+) site is built by V537, H539, and V542. R586 contacts CoA. At K611 the chain carries N6-acetyllysine.

This sequence belongs to the ATP-dependent AMP-binding enzyme family. Mg(2+) is required as a cofactor. In terms of processing, acetylated. Deacetylation by the SIR2-homolog deacetylase activates the enzyme.

It carries out the reaction acetate + ATP + CoA = acetyl-CoA + AMP + diphosphate. Functionally, catalyzes the conversion of acetate into acetyl-CoA (AcCoA), an essential intermediate at the junction of anabolic and catabolic pathways. AcsA undergoes a two-step reaction. In the first half reaction, AcsA combines acetate with ATP to form acetyl-adenylate (AcAMP) intermediate. In the second half reaction, it can then transfer the acetyl group from AcAMP to the sulfhydryl group of CoA, forming the product AcCoA. This chain is Acetyl-coenzyme A synthetase, found in Brucella abortus (strain S19).